Here is a 361-residue protein sequence, read N- to C-terminus: Peptide chain release factor 1 (361 aa).

Gln-235 carries the post-translational modification N5-methylglutamine. The disordered stretch occupies residues 288–307; it reads AAEAQTRKLQVGSGDRSQRI.

This sequence belongs to the prokaryotic/mitochondrial release factor family. In terms of processing, methylated by PrmC. Methylation increases the termination efficiency of RF1.

The protein localises to the cytoplasm. Peptide chain release factor 1 directs the termination of translation in response to the peptide chain termination codons UAG and UAA. The chain is Peptide chain release factor 1 from Xanthomonas axonopodis pv. citri (strain 306).